The following is a 278-amino-acid chain: Urease accessory protein UreD 1 (278 aa).

This sequence belongs to the UreD family. In terms of assembly, ureD, UreF and UreG form a complex that acts as a GTP-hydrolysis-dependent molecular chaperone, activating the urease apoprotein by helping to assemble the nickel containing metallocenter of UreC. The UreE protein probably delivers the nickel.

It localises to the cytoplasm. Functionally, required for maturation of urease via the functional incorporation of the urease nickel metallocenter. The polypeptide is Urease accessory protein UreD 1 (Bradyrhizobium sp. (strain ORS 278)).